We begin with the raw amino-acid sequence, 367 residues long: Probable peptidoglycan glycosyltransferase FtsW (367 aa).

Over 1–8 (MRRVEGYD) the chain is Cytoplasmic. Residues 9-29 (MIVLMMAVILTCFGVVMVYSA) traverse the membrane as a helical segment. At 30 to 49 (SSVMAAKKFHDGFFFLKRQS) the chain is on the periplasmic side. The chain crosses the membrane as a helical span at residues 50 to 70 (LYALIGFIGMGVAMHVDYHVW). The Cytoplasmic segment spans residues 71–72 (KK). A helical transmembrane segment spans residues 73–93 (WAVPLFLGTFFLLLLVFVPGI). Residues 94–138 (GGTAKGASRWIRLPGFNFQPSELAKVALIMYMAYSLEKRQDKLKQ) are Periplasmic-facing. Residues 139–159 (FMSGFFPYMLILGVFIAVLLA) traverse the membrane as a helical segment. Residues 160-161 (QH) lie on the Cytoplasmic side of the membrane. A helical membrane pass occupies residues 162–182 (DMGAALTMLAVAIVMLFAAGT). K183 is a topological domain (periplasmic). A helical transmembrane segment spans residues 184-204 (VQYILGMGLVALPGICYLVFT). Residues 205–225 (KAYRMRRITAFLDPWQDPTDA) are Cytoplasmic-facing. The chain crosses the membrane as a helical span at residues 226-246 (GFQIIQSWLALGTGGFFGQGL). At 247-266 (GEGKQKLFYLPEAHTDFILS) the chain is on the periplasmic side. Residues 267 to 287 (VLGEEMGFIGVVVIASMFLLL) traverse the membrane as a helical segment. Topologically, residues 288–304 (VQRSIRVAIAAEDSFGR) are cytoplasmic. The helical transmembrane segment at 305–325 (FLAFGIAILLGLEAFVNMAVV) threads the bilayer. Residues 326 to 335 (TGLLPTKGIA) lie on the Periplasmic side of the membrane. The helical transmembrane segment at 336 to 356 (LPFLSYGGSSLIISLCSVGVL) threads the bilayer. The Cytoplasmic segment spans residues 357 to 367 (LNVSTRMRGAA).

It belongs to the SEDS family. FtsW subfamily.

The protein localises to the cell inner membrane. It catalyses the reaction [GlcNAc-(1-&gt;4)-Mur2Ac(oyl-L-Ala-gamma-D-Glu-L-Lys-D-Ala-D-Ala)](n)-di-trans,octa-cis-undecaprenyl diphosphate + beta-D-GlcNAc-(1-&gt;4)-Mur2Ac(oyl-L-Ala-gamma-D-Glu-L-Lys-D-Ala-D-Ala)-di-trans,octa-cis-undecaprenyl diphosphate = [GlcNAc-(1-&gt;4)-Mur2Ac(oyl-L-Ala-gamma-D-Glu-L-Lys-D-Ala-D-Ala)](n+1)-di-trans,octa-cis-undecaprenyl diphosphate + di-trans,octa-cis-undecaprenyl diphosphate + H(+). It participates in cell wall biogenesis; peptidoglycan biosynthesis. Peptidoglycan polymerase that is essential for cell division. The protein is Probable peptidoglycan glycosyltransferase FtsW of Geobacter sp. (strain M18).